The chain runs to 619 residues: Mitogen-activated protein kinase kinase kinase 2 (619 aa).

Residues 25 to 45 form a disordered region; that stretch reads LSLQETRKAKSSSPKKQNDVR. A Phosphoserine modification is found at S26. The region spanning 43–122 is the PB1 domain; it reads DVRVKFEHRG…KSLKILLVIN (80 aa). Phosphoserine occurs at positions 153, 159, and 164. 3 disordered regions span residues 154 to 173, 201 to 248, and 289 to 355; these read IIGP…IPDE, LDPL…QEFS, and RTQG…APTN. Residues 203–219 are compositionally biased toward low complexity; sequence PLSLSSPENSGSGSCPS. Phosphoserine is present on residues S239, S297, S311, S331, S344, and S349. Positions 290-299 are enriched in polar residues; it reads TQGTSLRSPV. The span at 300–315 shows a compositional bias: low complexity; sequence SFSPTDHSLSTSSGSS. The segment covering 322-332 has biased composition (basic and acidic residues); the sequence is DDSRIRRRGSD. Positions 357–617 constitute a Protein kinase domain; the sequence is RLGKLLGQGA…DELLRHMFVH (261 aa). ATP-binding positions include 362–371 and K385; that span reads LGQGAFGRVY. The active-site Proton acceptor is the D483.

Belongs to the protein kinase superfamily. STE Ser/Thr protein kinase family. MAP kinase kinase kinase subfamily. Interacts with PKN2; the interaction activates PKN2 kinase activity in a MAP3K2-independent kinase activity. Self-associates. Binds both upstream activators and downstream substrates in multimolecular complexes. Interacts (via the kinase catalytic domain) with STK38. Interacts with XIAP/BIRC4. Mg(2+) is required as a cofactor. Autophosphorylated. In terms of processing, ubiquitination by XIAP/BIRC4 does not lead to proteasomal degradation.

The protein localises to the cytoplasm. The protein resides in the nucleus. It carries out the reaction L-seryl-[protein] + ATP = O-phospho-L-seryl-[protein] + ADP + H(+). The enzyme catalyses L-threonyl-[protein] + ATP = O-phospho-L-threonyl-[protein] + ADP + H(+). With respect to regulation, activated by phosphorylation on Thr-524. In terms of biological role, component of a protein kinase signal transduction cascade. Regulates the JNK and ERK5 pathways by phosphorylating and activating MAP2K5 and MAP2K7. Plays a role in caveolae kiss-and-run dynamics. The protein is Mitogen-activated protein kinase kinase kinase 2 (MAP3K2) of Homo sapiens (Human).